Reading from the N-terminus, the 144-residue chain is Large ribosomal subunit protein uL15 (144 aa).

The disordered stretch occupies residues 1–48 (MQLNNLKPAAGSKHAKRRVGRGIGSGLGKTAGRGHKGQKSRSGGFHKV). Residues 21–31 (RGIGSGLGKTA) are compositionally biased toward gly residues.

The protein belongs to the universal ribosomal protein uL15 family. As to quaternary structure, part of the 50S ribosomal subunit.

Binds to the 23S rRNA. The sequence is that of Large ribosomal subunit protein uL15 from Cupriavidus pinatubonensis (strain JMP 134 / LMG 1197) (Cupriavidus necator (strain JMP 134)).